Consider the following 374-residue polypeptide: Eukaryotic translation initiation factor 3 subunit M (374 aa).

Position 2 is an N-acetylserine (Ser2). Phosphoserine is present on residues Ser2 and Ser152. Residues 180–339 (AASKVMVELL…RKVVVSHSTH (160 aa)) enclose the PCI domain. At Lys254 the chain carries N6-acetyllysine. Phosphoserine is present on Ser367.

The protein belongs to the eIF-3 subunit M family. Component of the eukaryotic translation initiation factor 3 (eIF-3) complex, which is composed of 13 subunits: EIF3A, EIF3B, EIF3C, EIF3D, EIF3E, EIF3F, EIF3G, EIF3H, EIF3I, EIF3J, EIF3K, EIF3L and EIF3M. The eIF-3 complex appears to include 3 stable modules: module A is composed of EIF3A, EIF3B, EIF3G and EIF3I; module B is composed of EIF3F, EIF3H, and EIF3M; and module C is composed of EIF3C, EIF3D, EIF3E, EIF3K and EIF3L. EIF3C of module C binds EIF3B of module A and EIF3H of module B, thereby linking the three modules. EIF3J is a labile subunit that binds to the eIF-3 complex via EIF3B. The eIF-3 complex interacts with RPS6KB1 under conditions of nutrient depletion. Mitogenic stimulation leads to binding and activation of a complex composed of MTOR and RPTOR, leading to phosphorylation and release of RPS6KB1 and binding of EIF4B to eIF-3.

It is found in the cytoplasm. Its function is as follows. Component of the eukaryotic translation initiation factor 3 (eIF-3) complex, which is required for several steps in the initiation of protein synthesis. The eIF-3 complex associates with the 40S ribosome and facilitates the recruitment of eIF-1, eIF-1A, eIF-2:GTP:methionyl-tRNAi and eIF-5 to form the 43S pre-initiation complex (43S PIC). The eIF-3 complex stimulates mRNA recruitment to the 43S PIC and scanning of the mRNA for AUG recognition. The eIF-3 complex is also required for disassembly and recycling of post-termination ribosomal complexes and subsequently prevents premature joining of the 40S and 60S ribosomal subunits prior to initiation. The eIF-3 complex specifically targets and initiates translation of a subset of mRNAs involved in cell proliferation, including cell cycling, differentiation and apoptosis, and uses different modes of RNA stem-loop binding to exert either translational activation or repression. This is Eukaryotic translation initiation factor 3 subunit M (Eif3m) from Mus musculus (Mouse).